The chain runs to 89 residues: Large ribosomal subunit protein bL27 (89 aa).

Residues 1 to 21 are disordered; that stretch reads MAHKKAGGSSRNGRDSKGKRL.

It belongs to the bacterial ribosomal protein bL27 family.

This chain is Large ribosomal subunit protein bL27, found in Bradyrhizobium sp. (strain BTAi1 / ATCC BAA-1182).